Reading from the N-terminus, the 469-residue chain is Argininosuccinate lyase (469 aa).

Belongs to the lyase 1 family. Argininosuccinate lyase subfamily.

The protein localises to the cytoplasm. It carries out the reaction 2-(N(omega)-L-arginino)succinate = fumarate + L-arginine. The protein operates within amino-acid biosynthesis; L-arginine biosynthesis; L-arginine from L-ornithine and carbamoyl phosphate: step 3/3. The sequence is that of Argininosuccinate lyase from Burkholderia vietnamiensis (strain G4 / LMG 22486) (Burkholderia cepacia (strain R1808)).